The primary structure comprises 331 residues: tRNA-dihydrouridine(20/20a) synthase (331 aa).

FMN is bound by residues 18–20 (PML) and glutamine 70. Cysteine 100 functions as the Proton donor in the catalytic mechanism. FMN-binding positions include lysine 139, histidine 172, 212-214 (NGG), and 234-235 (GR).

Belongs to the Dus family. DusA subfamily. It depends on FMN as a cofactor.

It carries out the reaction 5,6-dihydrouridine(20) in tRNA + NADP(+) = uridine(20) in tRNA + NADPH + H(+). The enzyme catalyses 5,6-dihydrouridine(20) in tRNA + NAD(+) = uridine(20) in tRNA + NADH + H(+). The catalysed reaction is 5,6-dihydrouridine(20a) in tRNA + NADP(+) = uridine(20a) in tRNA + NADPH + H(+). It catalyses the reaction 5,6-dihydrouridine(20a) in tRNA + NAD(+) = uridine(20a) in tRNA + NADH + H(+). Its function is as follows. Catalyzes the synthesis of 5,6-dihydrouridine (D), a modified base found in the D-loop of most tRNAs, via the reduction of the C5-C6 double bond in target uridines. Specifically modifies U20 and U20a in tRNAs. The chain is tRNA-dihydrouridine(20/20a) synthase from Escherichia coli O6:H1 (strain CFT073 / ATCC 700928 / UPEC).